The primary structure comprises 552 residues: 5'-AMP-activated protein kinase catalytic subunit alpha-2 (552 aa).

The Protein kinase domain maps to 16–268; the sequence is YVLGDTLGVG…IKDIREHEWF (253 aa). ATP-binding positions include 22–30 and Lys-45; that span reads LGVGTFGKV. The Proton acceptor role is filled by Asp-139. Thr-172 is subject to Phosphothreonine; by LKB1 and CaMKK2. Thr-258 is subject to Phosphothreonine. The AIS stretch occupies residues 291–376; it reads EAVKEVCEKF…PERMPPLIAD (86 aa). Phosphoserine is present on residues Ser-377 and Ser-491.

The protein belongs to the protein kinase superfamily. CAMK Ser/Thr protein kinase family. SNF1 subfamily. As to quaternary structure, AMPK is a heterotrimer of an alpha catalytic subunit (PRKAA1 or PRKAA2), a beta (PRKAB1 or PRKAB2) and a gamma non-catalytic subunits (PRKAG1, PRKAG2 or PRKAG3). Interacts with FNIP1 and FNIP2. Interacts with DUSP29. Interacts with ARF6. The phosphorylated form at Thr-172 mediated by CamKK2 interacts with ACSS2. Mg(2+) serves as cofactor. Post-translationally, ubiquitinated. In terms of processing, phosphorylated at Thr-172 by STK11/LKB1 in complex with STE20-related adapter-alpha (STRADA) pseudo kinase and CAB39. Also phosphorylated at Thr-172 by CAMKK2; triggered by a rise in intracellular calcium ions, without detectable changes in the AMP/ATP ratio. CAMKK1 can also phosphorylate Thr-172, but at much lower level. Dephosphorylated by protein phosphatase 2A and 2C (PP2A and PP2C). Phosphorylated by ULK1; leading to negatively regulate AMPK activity and suggesting the existence of a regulatory feedback loop between ULK1 and AMPK. Dephosphorylated by PPM1A and PPM1B at Thr-172 (mediated by STK11/LKB1).

It localises to the cytoplasm. The protein localises to the nucleus. The catalysed reaction is L-seryl-[protein] + ATP = O-phospho-L-seryl-[protein] + ADP + H(+). It catalyses the reaction L-threonyl-[protein] + ATP = O-phospho-L-threonyl-[protein] + ADP + H(+). The enzyme catalyses L-seryl-[acetyl-CoA carboxylase] + ATP = O-phospho-L-seryl-[acetyl-CoA carboxylase] + ADP + H(+). It carries out the reaction L-seryl-[3-hydroxy-3-methylglutaryl-coenzyme A reductase] + ATP = O-phospho-L-seryl-[3-hydroxy-3-methylglutaryl-coenzyme A reductase] + ADP + H(+). Activated by phosphorylation on Thr-172. Binding of AMP to non-catalytic gamma subunit (PRKAG1, PRKAG2 or PRKAG3) results in allosteric activation, inducing phosphorylation on Thr-172. AMP-binding to gamma subunit also sustains activity by preventing dephosphorylation of Thr-172. ADP also stimulates Thr-172 phosphorylation, without stimulating already phosphorylated AMPK. ATP promotes dephosphorylation of Thr-172, rendering the enzyme inactive. Under physiological conditions AMPK mainly exists in its inactive form in complex with ATP, which is much more abundant than AMP. Selectively inhibited by compound C (6-[4-(2-Piperidin-1-yl-ethoxy)-phenyl)]-3-pyridin-4-yl-pyyrazolo[1,5-a] pyrimidine. Activated by resveratrol, a natural polyphenol present in red wine, and S17834, a synthetic polyphenol. Salicylate/aspirin directly activates kinase activity, primarily by inhibiting Thr-172 dephosphorylation. In terms of biological role, catalytic subunit of AMP-activated protein kinase (AMPK), an energy sensor protein kinase that plays a key role in regulating cellular energy metabolism. In response to reduction of intracellular ATP levels, AMPK activates energy-producing pathways and inhibits energy-consuming processes: inhibits protein, carbohydrate and lipid biosynthesis, as well as cell growth and proliferation. AMPK acts via direct phosphorylation of metabolic enzymes, and by longer-term effects via phosphorylation of transcription regulators. Regulates lipid synthesis by phosphorylating and inactivating lipid metabolic enzymes such as ACACA, ACACB, GYS1, HMGCR and LIPE; regulates fatty acid and cholesterol synthesis by phosphorylating acetyl-CoA carboxylase (ACACA and ACACB) and hormone-sensitive lipase (LIPE) enzymes, respectively. Promotes lipolysis of lipid droplets by mediating phosphorylation of isoform 1 of CHKA (CHKalpha2). Regulates insulin-signaling and glycolysis by phosphorylating IRS1, PFKFB2 and PFKFB3. Involved in insulin receptor/INSR internalization. AMPK stimulates glucose uptake in muscle by increasing the translocation of the glucose transporter SLC2A4/GLUT4 to the plasma membrane, possibly by mediating phosphorylation of TBC1D4/AS160. Regulates transcription and chromatin structure by phosphorylating transcription regulators involved in energy metabolism such as CRTC2/TORC2, FOXO3, histone H2B, HDAC5, MEF2C, MLXIPL/ChREBP, EP300, HNF4A, p53/TP53, SREBF1, SREBF2 and PPARGC1A. Acts as a key regulator of glucose homeostasis in liver by phosphorylating CRTC2/TORC2, leading to CRTC2/TORC2 sequestration in the cytoplasm. In response to stress, phosphorylates 'Ser-36' of histone H2B (H2BS36ph), leading to promote transcription. Acts as a key regulator of cell growth and proliferation by phosphorylating FNIP1, TSC2, RPTOR, WDR24 and ATG1/ULK1: in response to nutrient limitation, negatively regulates the mTORC1 complex by phosphorylating RPTOR component of the mTORC1 complex and by phosphorylating and activating TSC2. Also phosphorylates and inhibits GATOR2 subunit WDR24 in response to nutrient limitation, leading to suppress glucose-mediated mTORC1 activation. In response to energetic stress, phosphorylates FNIP1, inactivating the non-canonical mTORC1 signaling, thereby promoting nuclear translocation of TFEB and TFE3, and inducing transcription of lysosomal or autophagy genes. In response to nutrient limitation, promotes autophagy by phosphorylating and activating ATG1/ULK1. In that process, it also activates WDR45/WIPI4. Phosphorylates CASP6, thereby preventing its autoprocessing and subsequent activation. AMPK also acts as a regulator of circadian rhythm by mediating phosphorylation of CRY1, leading to destabilize it. May regulate the Wnt signaling pathway by phosphorylating CTNNB1, leading to stabilize it. Also acts as a regulator of cellular polarity by remodeling the actin cytoskeleton; probably by indirectly activating myosin. Also phosphorylates CFTR, EEF2K, KLC1, NOS3 and SLC12A1. Plays an important role in the differential regulation of pro-autophagy (composed of PIK3C3, BECN1, PIK3R4 and UVRAG or ATG14) and non-autophagy (composed of PIK3C3, BECN1 and PIK3R4) complexes, in response to glucose starvation. Can inhibit the non-autophagy complex by phosphorylating PIK3C3 and can activate the pro-autophagy complex by phosphorylating BECN1. Upon glucose starvation, promotes ARF6 activation in a kinase-independent manner leading to cell migration. Upon glucose deprivation mediates the phosphorylation of ACSS2 at 'Ser-659', which exposes the nuclear localization signal of ACSS2, required for its interaction with KPNA1 and nuclear translocation. Upon stress, regulates mitochondrial fragmentation through phosphorylation of MTFR1L. This is 5'-AMP-activated protein kinase catalytic subunit alpha-2 from Mus musculus (Mouse).